Reading from the N-terminus, the 95-residue chain is Aspartyl/glutamyl-tRNA(Asn/Gln) amidotransferase subunit C (95 aa).

It belongs to the GatC family. In terms of assembly, heterotrimer of A, B and C subunits.

The enzyme catalyses L-glutamyl-tRNA(Gln) + L-glutamine + ATP + H2O = L-glutaminyl-tRNA(Gln) + L-glutamate + ADP + phosphate + H(+). It catalyses the reaction L-aspartyl-tRNA(Asn) + L-glutamine + ATP + H2O = L-asparaginyl-tRNA(Asn) + L-glutamate + ADP + phosphate + 2 H(+). In terms of biological role, allows the formation of correctly charged Asn-tRNA(Asn) or Gln-tRNA(Gln) through the transamidation of misacylated Asp-tRNA(Asn) or Glu-tRNA(Gln) in organisms which lack either or both of asparaginyl-tRNA or glutaminyl-tRNA synthetases. The reaction takes place in the presence of glutamine and ATP through an activated phospho-Asp-tRNA(Asn) or phospho-Glu-tRNA(Gln). The chain is Aspartyl/glutamyl-tRNA(Asn/Gln) amidotransferase subunit C from Trichlorobacter lovleyi (strain ATCC BAA-1151 / DSM 17278 / SZ) (Geobacter lovleyi).